The chain runs to 156 residues: Small ribosomal subunit protein uS7 (156 aa).

The protein belongs to the universal ribosomal protein uS7 family. Part of the 30S ribosomal subunit. Contacts proteins S9 and S11.

Its function is as follows. One of the primary rRNA binding proteins, it binds directly to 16S rRNA where it nucleates assembly of the head domain of the 30S subunit. Is located at the subunit interface close to the decoding center, probably blocks exit of the E-site tRNA. The protein is Small ribosomal subunit protein uS7 of Parvibaculum lavamentivorans (strain DS-1 / DSM 13023 / NCIMB 13966).